Reading from the N-terminus, the 410-residue chain is Dephospho-CoA kinase (410 aa).

Residues 3–201 (CIGITGGIGA…HRILPFAYNL (199 aa)) form the DPCK domain. 11 to 16 (GAGKSL) is a binding site for ATP. The tract at residues 196–410 (PFAYNLSQRQ…EWADSTGWRL (215 aa)) is UPF0157.

The protein in the N-terminal section; belongs to the CoaE family. This sequence in the C-terminal section; belongs to the UPF0157 (GrpB) family.

The protein localises to the cytoplasm. It carries out the reaction 3'-dephospho-CoA + ATP = ADP + CoA + H(+). It participates in cofactor biosynthesis; coenzyme A biosynthesis; CoA from (R)-pantothenate: step 5/5. Its function is as follows. Catalyzes the phosphorylation of the 3'-hydroxyl group of dephosphocoenzyme A to form coenzyme A. The protein is Dephospho-CoA kinase of Mycobacterium leprae (strain TN).